Reading from the N-terminus, the 1038-residue chain is Bone morphogenetic protein receptor type-2 (1038 aa).

An N-terminal signal peptide occupies residues Met-1 to Ala-26. Topologically, residues Ser-27–Thr-150 are extracellular. Cystine bridges form between Cys-34–Cys-66, Cys-60–Cys-84, Cys-94–Cys-117, Cys-99–Cys-116, and Cys-118–Cys-123. Asn-55 carries N-linked (GlcNAc...) asparagine glycosylation. Residue Asn-110 is glycosylated (N-linked (GlcNAc...) asparagine). N-linked (GlcNAc...) asparagine glycosylation is present at Asn-126. The chain crosses the membrane as a helical span at residues Ile-151–Gly-171. Topologically, residues Tyr-172–Leu-1038 are cytoplasmic. One can recognise a Protein kinase domain in the interval Leu-203–Leu-504. ATP-binding positions include Ile-209–Val-217, Lys-230, and Glu-280–Tyr-282. Catalysis depends on Asp-333, which acts as the Proton acceptor. ATP-binding positions include Arg-337–Asn-338 and Asp-351. A Phosphothreonine modification is found at Thr-379. Ser-586 is subject to Phosphoserine. A disordered region spans residues Gln-593–Met-626. A compositionally biased stretch (low complexity) spans Thr-603–Met-626. Phosphoserine is present on residues Ser-680 and Ser-681. The segment at Pro-746 to Pro-769 is disordered. A Phosphoserine modification is found at Ser-843. Over residues Arg-872 to Glu-896 the composition is skewed to basic and acidic residues. Residues Arg-872–Arg-974 are disordered. 2 stretches are compositionally biased toward polar residues: residues Pro-909–Ala-924 and Arg-937–Lys-964.

The protein belongs to the protein kinase superfamily. TKL Ser/Thr protein kinase family. TGFB receptor subfamily. In terms of assembly, interacts with GDF5. Interacts with BMP4. Interacts with SCUBE3. Interacts with TSC22D1/TSC-22. Interacts with activin A/INHBA. It depends on Mg(2+) as a cofactor. Mn(2+) is required as a cofactor.

The protein localises to the cell membrane. The enzyme catalyses L-threonyl-[receptor-protein] + ATP = O-phospho-L-threonyl-[receptor-protein] + ADP + H(+). The catalysed reaction is L-seryl-[receptor-protein] + ATP = O-phospho-L-seryl-[receptor-protein] + ADP + H(+). Its function is as follows. On ligand binding, forms a receptor complex consisting of two type II and two type I transmembrane serine/threonine kinases. Type II receptors phosphorylate and activate type I receptors which autophosphorylate, then bind and activate SMAD transcriptional regulators. Can also mediate signaling through the activation of the p38MAPK cascade. Binds to BMP7, BMP2 and, less efficiently, BMP4. Binding is weak but enhanced by the presence of type I receptors for BMPs. Mediates induction of adipogenesis by GDF6. Promotes signaling also by binding to activin A/INHBA. This Mus musculus (Mouse) protein is Bone morphogenetic protein receptor type-2 (Bmpr2).